A 370-amino-acid polypeptide reads, in one-letter code: Thiamine-repressible mitochondrial transport protein THI74 (370 aa).

The Cytoplasmic segment spans residues 1-10; it reads MNRVGIDVDH. The chain crosses the membrane as a helical span at residues 11–31; it reads MIGVLLLAVVVVFWVGASCLT. Over 32-42 the chain is Mitochondrial intermembrane; sequence NELLETNAYNK. A helical transmembrane segment spans residues 43–63; that stretch reads PFFLTYLNISSFALYLTPDLW. At 64–119 the chain is on the cytoplasmic side; sequence RIIQSRRKSLQERTERTLPIHTQESFSEFLPLLSSTPSTSSNLSSIADTKVKDTMR. Residues 120–140 traverse the membrane as a helical segment; sequence LSLLFCVLWFVANLAANAALS. In terms of domain architecture, EamA spans 129–190; that stretch reads FVANLAANAA…SLFGIILIVM (62 aa). The Mitochondrial intermembrane segment spans residues 141 to 146; that stretch reads YTTVAS. Residues 147–167 traverse the membrane as a helical segment; sequence STILSSTSSFFTLFLATSLGI. Over 168–169 the chain is Cytoplasmic; the sequence is ET. A helical transmembrane segment spans residues 170 to 190; sequence FSTKKLLGLFVSLFGIILIVM. At 191-203 the chain is on the mitochondrial intermembrane side; that stretch reads QSSKQQDSVSASS. Residues 204–224 traverse the membrane as a helical segment; the sequence is FLVGNTLALLGSLGYSVYTTL. Topologically, residues 225 to 239 are cytoplasmic; it reads LKYEISSKGLRLDIQ. Residues 240–260 form a helical membrane-spanning segment; sequence MFLGYVGIFTFLLFWPILIIL. The Mitochondrial intermembrane portion of the chain corresponds to 261-273; the sequence is DITHMETFELPSN. A helical transmembrane segment spans residues 274–294; that stretch reads FHISFLVMLNCIIIFVSDYFW. Over 295-303 the chain is Cytoplasmic; that stretch reads CKALILTSP. The chain crosses the membrane as a helical span at residues 304–324; sequence LVVTVALTFTIPLAMFADFVW. Residues 325–326 lie on the Mitochondrial intermembrane side of the membrane; the sequence is RE. The chain crosses the membrane as a helical span at residues 327-347; it reads AFFTPWYIIGVIFIFVSFFLV. The Cytoplasmic portion of the chain corresponds to 348–370; sequence NHRGESAVEKDCAAVEKGPILDA.

It localises to the mitochondrion membrane. May be involved in thiaminediphosphate transport across the mitochondrial membrane. The polypeptide is Thiamine-repressible mitochondrial transport protein THI74 (THI74) (Saccharomyces cerevisiae (strain ATCC 204508 / S288c) (Baker's yeast)).